Here is a 975-residue protein sequence, read N- to C-terminus: Nesprin-3 (975 aa).

The Cytoplasmic portion of the chain corresponds to 1–925; sequence MTQQPQDDFD…LGSLFRRACC (925 aa). One copy of the Spectrin 1 repeat lies at 220 to 325; sequence REHEEYQAGV…WEEEEERLRG (106 aa). The stretch at 617-645 forms a coiled coil; it reads NHQHKMDQLSSDFQALQRSLEDLVDRCRQ. The Spectrin 2 repeat unit spans residues 647-740; sequence VQEHCTFSHQ…RELAESWRAL (94 aa). Residues 917–975 form the KASH domain; the sequence is GSLFRRACCVALPLQLLLLLFLLLLFLLPIREEDRSCTLANNFARSFTLMLRYNGPPPT. The chain crosses the membrane as a helical; Anchor for type IV membrane protein span at residues 926-946; that stretch reads VALPLQLLLLLFLLLLFLLPI. Residues 947–975 are Perinuclear space-facing; that stretch reads REEDRSCTLANNFARSFTLMLRYNGPPPT.

The protein belongs to the nesprin family. Core component of LINC complexes which are composed of inner nuclear membrane SUN domain-containing proteins coupled to outer nuclear membrane KASH domain-containing nesprins. SUN and KASH domain-containing proteins seem to bind each other promiscuously; however, differentially expression of LINC complex constituents can give rise to specific assemblies. Interacts with SUN1 and SUN2; probably forming respective LINC complexes. Interacts with PLEC (via actin-binding domain). Interacts with DST. Interacts with SYNE1 via spectrin repeats. Interacts (via KASH domain) with TOR1A (ATP-bound); the interaction is required for SYNE3 nuclear envelope localization. The disulfid bond with SUN1 or SUN2 is required for stability of the respective LINC complex under tensile forces. In terms of tissue distribution, expressed in aortic endothelial cells (at protein level).

The protein resides in the nucleus outer membrane. It localises to the nucleus envelope. It is found in the rough endoplasmic reticulum. In terms of biological role, as a component of the LINC (LInker of Nucleoskeleton and Cytoskeleton) complex involved in the connection between the nuclear lamina and the cytoskeleton. The nucleocytoplasmic interactions established by the LINC complex play an important role in the transmission of mechanical forces across the nuclear envelope and in nuclear movement and positioning. Probable anchoring protein which tethers the nucleus to the cytoskeleton by binding PLEC which can associate with the intermediate filament system. Plays a role in the regulation of aortic epithelial cell morphology, and is required for flow-induced centrosome polarization and directional migration in aortic endothelial cells. This Homo sapiens (Human) protein is Nesprin-3.